A 119-amino-acid polypeptide reads, in one-letter code: Protein Wnt-4 (119 aa).

Ser1 carries the O-palmitoleoyl serine; by PORCN lipid modification. Cystine bridges form between Cys69-Cys100 and Cys85-Cys95. Asn86 carries an N-linked (GlcNAc...) asparagine glycan.

It belongs to the Wnt family. Palmitoleoylation is required for efficient binding to frizzled receptors. Depalmitoleoylation leads to Wnt signaling pathway inhibition.

It localises to the secreted. It is found in the extracellular space. Its subcellular location is the extracellular matrix. In terms of biological role, ligand for members of the frizzled family of seven transmembrane receptors. Plays an important role in embryonic development. This chain is Protein Wnt-4 (WNT-4), found in Plethodon jordani (Red-cheeked salamander).